The sequence spans 684 residues: Pescadillo homolog (684 aa).

Residues 284-352 (DAAAAEASSN…DSDEEADDEA (69 aa)) form a disordered region. Over residues 285–294 (AAAAEASSNA) the composition is skewed to low complexity. Over residues 296 to 310 (TRKDGKKLSTRDVKR) the composition is skewed to basic and acidic residues. Residues 342-352 (QDSDEEADDEA) show a composition bias toward acidic residues. The 100-residue stretch at 387 to 486 (PLPMLFSRYV…QILPTDPYRP (100 aa)) folds into the BRCT domain. Disordered regions lie at residues 508–580 (GYVP…ALLA) and 612–684 (AASL…NKKP). Residues 528-543 (ADEDEDEDEDEDEDED) are compositionally biased toward acidic residues. Residues 544 to 570 (KAGSGRGDDKNVAAREQDAVEKHDKTP) show a composition bias toward basic and acidic residues. Over residues 612-624 (AASLKSHKKKKRT) the composition is skewed to basic residues. Basic and acidic residues predominate over residues 663-675 (KKKEEKMRLEAKK).

This sequence belongs to the pescadillo family. In terms of assembly, component of the NOP7 complex, composed of ERB1, NOP7 and YTM1. The complex is held together by ERB1, which interacts with NOP7 via its N-terminal domain and with YTM1 via a high-affinity interaction between the seven-bladed beta-propeller domains of the 2 proteins. The NOP7 complex associates with the 66S pre-ribosome.

Its subcellular location is the nucleus. It is found in the nucleolus. The protein resides in the nucleoplasm. In terms of biological role, component of the NOP7 complex, which is required for maturation of the 25S and 5.8S ribosomal RNAs and formation of the 60S ribosome. The protein is Pescadillo homolog of Malassezia globosa (strain ATCC MYA-4612 / CBS 7966) (Dandruff-associated fungus).